A 333-amino-acid chain; its full sequence is Adenosine deaminase (333 aa).

His12 and His14 together coordinate Zn(2+). 3 residues coordinate substrate: His14, Asp16, and Gly170. His197 lines the Zn(2+) pocket. The active-site Proton donor is Glu200. Asp278 contacts Zn(2+). Residue Asp279 coordinates substrate.

It belongs to the metallo-dependent hydrolases superfamily. Adenosine and AMP deaminases family. Adenosine deaminase subfamily. Zn(2+) serves as cofactor.

It carries out the reaction adenosine + H2O + H(+) = inosine + NH4(+). The catalysed reaction is 2'-deoxyadenosine + H2O + H(+) = 2'-deoxyinosine + NH4(+). Catalyzes the hydrolytic deamination of adenosine and 2-deoxyadenosine. The sequence is that of Adenosine deaminase from Pseudoalteromonas translucida (strain TAC 125).